The chain runs to 729 residues: Putative cyclic nucleotide-gated ion channel 19 (729 aa).

Residues 1-172 are Cytoplasmic-facing; the sequence is MAHTRTFTSR…SKFVQVWTRV (172 aa). The disordered stretch occupies residues 52 to 82; sequence SGPIHSTRRTEPLFSPSPQESPDSSSTVDVP. Over residues 67-81 the composition is skewed to low complexity; the sequence is PSPQESPDSSSTVDV. Residues 173 to 193 traverse the membrane as a helical segment; it reads LAFSSLVAIFIDPLFFFLLLI. Residues 194–208 lie on the Extracellular side of the membrane; sequence QQDNKCIAIDWRATK. A helical membrane pass occupies residues 209-229; it reads VLVSLRSITDLIFFINILLQF. Topologically, residues 230–261 are cytoplasmic; that stretch reads RLAYVAPESRIVGAGQLVDHPRKIARHYFRGK. Residues 262–282 form a helical membrane-spanning segment; it reads FLLDMFIVFPIPQIMILRIIP. The Extracellular segment spans residues 283-295; sequence LHLGTRREESEKQ. A helical transmembrane segment spans residues 296-316; sequence ILRATVLFQYIPKLYRLLPLL. Residues 317–332 lie on the Cytoplasmic side of the membrane; it reads AGQTSTGFIFESAWAN. Residues 333–353 form a helical membrane-spanning segment; sequence FVINLLTFMLAGHAVGSCWYL. Over 354–451 the chain is Extracellular; sequence SALQRVKKCM…STLAGNLSPS (98 aa). A helical membrane pass occupies residues 452–472; sequence YSVGEVFFTMGIIGLGLLLFA. Over 473–729 the chain is Cytoplasmic; it reads RLIGNMHNFL…LNTAHSNSNR (257 aa). Residues 560 to 677 and E625 each bind a nucleoside 3',5'-cyclic phosphate; that span reads IFSL…VTSL. The interval 678–694 is calmodulin-binding; that stretch reads FSRFLRSHRVQGAIRYE. An IQ domain is found at 699 to 728; that stretch reads RLRAAMQIQVAWRYRKRQLQRLNTAHSNSN.

It belongs to the cyclic nucleotide-gated cation channel (TC 1.A.1.5) family. As to quaternary structure, homotetramer or heterotetramer.

It localises to the cell membrane. Its function is as follows. Putative cyclic nucleotide-gated ion channel. The protein is Putative cyclic nucleotide-gated ion channel 19 (CNGC19) of Arabidopsis thaliana (Mouse-ear cress).